We begin with the raw amino-acid sequence, 129 residues long: Cytochrome b5 (129 aa).

A Cytochrome b5 heme-binding domain is found at 8–84; it reads TTIYTHEEVA…LEKLYIGNLK (77 aa). His-43 and His-67 together coordinate heme. The chain crosses the membrane as a helical span at residues 104-124; sequence GINFPLIAVGVFLAAFGVYYY.

Belongs to the cytochrome b5 family.

It is found in the endoplasmic reticulum membrane. It localises to the microsome membrane. Functionally, membrane bound hemoprotein which function as an electron carrier for several membrane bound oxygenases. The chain is Cytochrome b5 (Cytb5) from Candida tropicalis (Yeast).